The following is a 544-amino-acid chain: Aspartokinase 2, chloroplastic (544 aa).

A chloroplast-targeting transit peptide spans 1–84; sequence MASLQLYGVK…SSGTGKELTC (84 aa). ATP contacts are provided by Lys-87, Gly-90, and Ser-119. Glu-203 lines the substrate pocket. ACT domains are found at residues 401–479 and 481–544; these read IAST…RRSI and SLIG…ETDP.

It belongs to the aspartokinase family. In terms of tissue distribution, expressed in stems, leaves, floral organs and young seedlings.

The protein resides in the plastid. It localises to the chloroplast. The enzyme catalyses L-aspartate + ATP = 4-phospho-L-aspartate + ADP. Its pathway is amino-acid biosynthesis; L-lysine biosynthesis via DAP pathway; (S)-tetrahydrodipicolinate from L-aspartate: step 1/4. The protein operates within amino-acid biosynthesis; L-methionine biosynthesis via de novo pathway; L-homoserine from L-aspartate: step 1/3. It participates in amino-acid biosynthesis; L-threonine biosynthesis; L-threonine from L-aspartate: step 1/5. Allosterically inhibited by lysine, but not by S-adenosyl-L-methionine (SAM). K(0.5) for lysine in the presence of physiological concentrations of substrates is 12.5 uM. No inhibition by threonine or leucine and no activation or inhibition by alanine, cysteine, isoleucine, serine, valine, methionine, glutamine, asparagine, glutamic acid or arginine. Its function is as follows. Involved in the first step of essential amino acids lysine, threonine, methionine and isoleucine synthesis via the aspartate-family pathway. This chain is Aspartokinase 2, chloroplastic (AK2), found in Arabidopsis thaliana (Mouse-ear cress).